A 142-amino-acid chain; its full sequence is MEPQFPTDLDSYCKYFNISFFDLVLKCIFCKFSVSIVDLASFHNKRLSVIWRDNTPFACCTKCLRLTALYEKDNFFVCTAKSHLLTGLVKKELSDINIRCQHCYSFLDYLEKLYHLYNDVDFLLIRGTWRGVCRNCISHEGR.

2 zinc fingers span residues 27–63 and 100–136; these read CIFC…CTKC and CQHC…CRNC.

The protein belongs to the papillomaviridae E6 protein family. Forms homodimers. Interacts with ubiquitin-protein ligase UBE3A/E6-AP; this interaction stimulates UBE3A ubiquitin activity. Interacts with host BAK1.

The protein resides in the host cytoplasm. The protein localises to the host nucleus. Its function is as follows. Plays a major role in the induction and maintenance of cellular transformation. E6 associates with host UBE3A/E6-AP ubiquitin-protein ligase and modulates its activity. Protects host keratinocytes from apoptosis by mediating the degradation of host BAK1. May also inhibit host immune response. This Homo sapiens (Human) protein is Protein E6.